The chain runs to 642 residues: Myrosinase-binding protein 2 (642 aa).

Jacalin-type lectin domains are found at residues 2–151, 156–291, 334–477, and 490–633; these read SEKV…HFFA, LKHF…HFAP, PNKV…YFAP, and SKKL…HAVP. Residues 296–334 are compositionally biased toward pro residues; the sequence is TPAPAPAPAPAPAPAPSPAPASAPVPAPAPTPAPAPAPP. 2 disordered regions span residues 296-338 and 479-499; these read TPAP…NKVE and TNST…RGGN. Positions 479–490 are enriched in low complexity; sequence TNSTTPSTPSTS.

The protein belongs to the jacalin lectin family. Expressed in flowers. Detected mainly in ovules and styles of immature flowers, but also in pistils, styles, stamens, petals and embryos. Not detected in leaves.

The polypeptide is Myrosinase-binding protein 2 (F-ATMBP) (Arabidopsis thaliana (Mouse-ear cress)).